A 141-amino-acid polypeptide reads, in one-letter code: EGSGGSGSSGHFTTGSNVHMSSVTNTSNGGTGGTGTGTGTGTGTGTGTGTGTGTGTGTGTGTGTGTGTASGTATGTASGTATGTANGTGTGKGTDTHTAGSGSGSGTGTGTGTGTTTTTTTGNNSSSSTPPVTLTESLLNK.

The segment at 1 to 141 is disordered; sequence EGSGGSGSSG…VTLTESLLNK (141 aa). Residues 11 to 23 show a composition bias toward polar residues; it reads HFTTGSNVHMSSV. Gly residues predominate over residues 29-68; it reads GGTGGTGTGTGTGTGTGTGTGTGTGTGTGTGTGTGTGTGT. A run of 19 repeats spans residues 30–31, 33–34, 35–36, 37–38, 39–40, 41–42, 43–44, 45–46, 47–48, 49–50, 51–52, 53–54, 55–56, 57–58, 59–60, 61–62, 63–64, 65–66, and 67–68. Positions 30 to 94 are 32 X 2 AA approximate tandem repeats of G-T; that stretch reads GTGGTGTGTG…ANGTGTGKGT (65 aa). The 20; approximate repeat unit spans residues 69–70; that stretch reads AS. The segment covering 69-85 has biased composition (low complexity); that stretch reads ASGTATGTASGTATGTA. Repeat 21 spans residues 71–72; that stretch reads GT. The 22; approximate repeat unit spans residues 73–74; the sequence is AT. Repeat unit 23 spans residues 75–76; it reads GT. One copy of the 24; approximate repeat lies at 77 to 78; sequence AS. The stretch at 79-80 is repeat 25; the sequence is GT. The 26; approximate repeat unit spans residues 81–82; that stretch reads AT. Copy 27 of the repeat occupies 83 to 84; the sequence is GT. Residues 85–86 form a 28; approximate repeat; that stretch reads AN. 2 consecutive repeat copies span residues 87-88 and 89-90. The stretch at 91–92 is one 31; approximate repeat; it reads GK. Repeat unit 32 spans residues 93–94; the sequence is GT. Residues 101–113 are compositionally biased toward gly residues; sequence SGSGSGTGTGTGT. Residues 114 to 129 show a composition bias toward low complexity; sequence GTTTTTTTGNNSSSST. The segment covering 130–141 has biased composition (polar residues); the sequence is PPVTLTESLLNK.

Forms a heterodimer with timeless (TIM); the complex then translocates into the nucleus. Post-translationally, phosphorylated with a circadian rhythmicity, probably by the double-time protein (dbt). Phosphorylation could be implicated in the stability of per monomer and in the formation of heterodimer per-tim.

The protein resides in the nucleus. The protein localises to the cytoplasm. It localises to the perinuclear region. Its function is as follows. Essential for biological clock functions. Determines the period length of circadian and ultradian rhythms; an increase in PER dosage leads to shortened circadian rhythms and a decrease leads to lengthened circadian rhythms. Essential for the circadian rhythmicity of locomotor activity, eclosion behavior, and for the rhythmic component of the male courtship song that originates in the thoracic nervous system. The biological cycle depends on the rhythmic formation and nuclear localization of the TIM-PER complex. Light induces the degradation of TIM, which promotes elimination of PER. Nuclear activity of the heterodimer coordinatively regulates PER and TIM transcription through a negative feedback loop. Behaves as a negative element in circadian transcriptional loop. Does not appear to bind DNA, suggesting indirect transcriptional inhibition. This Drosophila serrata (Fruit fly) protein is Period circadian protein (per).